We begin with the raw amino-acid sequence, 146 residues long: D-aminoacyl-tRNA deacylase (146 aa).

The short motif at 138–139 (GP) is the Gly-cisPro motif, important for rejection of L-amino acids element.

Belongs to the DTD family. As to quaternary structure, homodimer.

Its subcellular location is the cytoplasm. It carries out the reaction glycyl-tRNA(Ala) + H2O = tRNA(Ala) + glycine + H(+). The catalysed reaction is a D-aminoacyl-tRNA + H2O = a tRNA + a D-alpha-amino acid + H(+). Its function is as follows. An aminoacyl-tRNA editing enzyme that deacylates mischarged D-aminoacyl-tRNAs. Also deacylates mischarged glycyl-tRNA(Ala), protecting cells against glycine mischarging by AlaRS. Acts via tRNA-based rather than protein-based catalysis; rejects L-amino acids rather than detecting D-amino acids in the active site. By recycling D-aminoacyl-tRNA to D-amino acids and free tRNA molecules, this enzyme counteracts the toxicity associated with the formation of D-aminoacyl-tRNA entities in vivo and helps enforce protein L-homochirality. This Tolumonas auensis (strain DSM 9187 / NBRC 110442 / TA 4) protein is D-aminoacyl-tRNA deacylase.